The following is a 523-amino-acid chain: tRNA-2-methylthio-N(6)-dimethylallyladenosine synthase (523 aa).

Residues 1 to 26 (MNEKQRLEQTGQIQTASHPADRKSDL) form a disordered region. A compositionally biased stretch (polar residues) spans 8-17 (EQTGQIQTAS). Positions 80 to 198 (RKFYIRTYGC…LPYILHEAYM (119 aa)) constitute an MTTase N-terminal domain. The [4Fe-4S] cluster site is built by C89, C125, C159, C235, C239, and C242. Positions 221-451 (RKGNIKAWVN…NALVQEIAAK (231 aa)) constitute a Radical SAM core domain. The 64-residue stretch at 454 to 517 (KQYEGQVVEV…TWTLTGELAN (64 aa)) folds into the TRAM domain.

The protein belongs to the methylthiotransferase family. MiaB subfamily. Monomer. It depends on [4Fe-4S] cluster as a cofactor.

Its subcellular location is the cytoplasm. It carries out the reaction N(6)-dimethylallyladenosine(37) in tRNA + (sulfur carrier)-SH + AH2 + 2 S-adenosyl-L-methionine = 2-methylsulfanyl-N(6)-dimethylallyladenosine(37) in tRNA + (sulfur carrier)-H + 5'-deoxyadenosine + L-methionine + A + S-adenosyl-L-homocysteine + 2 H(+). Catalyzes the methylthiolation of N6-(dimethylallyl)adenosine (i(6)A), leading to the formation of 2-methylthio-N6-(dimethylallyl)adenosine (ms(2)i(6)A) at position 37 in tRNAs that read codons beginning with uridine. This Geobacillus thermodenitrificans (strain NG80-2) protein is tRNA-2-methylthio-N(6)-dimethylallyladenosine synthase.